The chain runs to 512 residues: 2-isopropylmalate synthase (512 aa).

The Pyruvate carboxyltransferase domain occupies 5–268 (LIIFDTTLRD…DVDIETQHIL (264 aa)). Positions 14, 202, 204, and 239 each coordinate Mn(2+). Residues 394–512 (SFVSLSQHSE…SKADRVAAQG (119 aa)) form a regulatory domain region.

The protein belongs to the alpha-IPM synthase/homocitrate synthase family. LeuA type 1 subfamily. Homodimer. The cofactor is Mn(2+).

The protein resides in the cytoplasm. The enzyme catalyses 3-methyl-2-oxobutanoate + acetyl-CoA + H2O = (2S)-2-isopropylmalate + CoA + H(+). The protein operates within amino-acid biosynthesis; L-leucine biosynthesis; L-leucine from 3-methyl-2-oxobutanoate: step 1/4. Its function is as follows. Catalyzes the condensation of the acetyl group of acetyl-CoA with 3-methyl-2-oxobutanoate (2-ketoisovalerate) to form 3-carboxy-3-hydroxy-4-methylpentanoate (2-isopropylmalate). The chain is 2-isopropylmalate synthase from Albidiferax ferrireducens (strain ATCC BAA-621 / DSM 15236 / T118) (Rhodoferax ferrireducens).